A 179-amino-acid chain; its full sequence is Large ribosomal subunit protein uL5 (179 aa).

Belongs to the universal ribosomal protein uL5 family. As to quaternary structure, part of the 50S ribosomal subunit; part of the 5S rRNA/L5/L18/L25 subcomplex. Contacts the 5S rRNA and the P site tRNA. Forms a bridge to the 30S subunit in the 70S ribosome.

Its function is as follows. This is one of the proteins that bind and probably mediate the attachment of the 5S RNA into the large ribosomal subunit, where it forms part of the central protuberance. In the 70S ribosome it contacts protein S13 of the 30S subunit (bridge B1b), connecting the 2 subunits; this bridge is implicated in subunit movement. Contacts the P site tRNA; the 5S rRNA and some of its associated proteins might help stabilize positioning of ribosome-bound tRNAs. The sequence is that of Large ribosomal subunit protein uL5 from Pelobacter propionicus (strain DSM 2379 / NBRC 103807 / OttBd1).